Here is a 240-residue protein sequence, read N- to C-terminus: 1-(5-phosphoribosyl)-5-[(5-phosphoribosylamino)methylideneamino] imidazole-4-carboxamide isomerase (240 aa).

D8 functions as the Proton acceptor in the catalytic mechanism. The Proton donor role is filled by D129.

It belongs to the HisA/HisF family.

The protein localises to the cytoplasm. The catalysed reaction is 1-(5-phospho-beta-D-ribosyl)-5-[(5-phospho-beta-D-ribosylamino)methylideneamino]imidazole-4-carboxamide = 5-[(5-phospho-1-deoxy-D-ribulos-1-ylimino)methylamino]-1-(5-phospho-beta-D-ribosyl)imidazole-4-carboxamide. It participates in amino-acid biosynthesis; L-histidine biosynthesis; L-histidine from 5-phospho-alpha-D-ribose 1-diphosphate: step 4/9. This is 1-(5-phosphoribosyl)-5-[(5-phosphoribosylamino)methylideneamino] imidazole-4-carboxamide isomerase from Clostridium beijerinckii (strain ATCC 51743 / NCIMB 8052) (Clostridium acetobutylicum).